A 589-amino-acid chain; its full sequence is Aspartate--tRNA ligase (589 aa).

E174 contributes to the L-aspartate binding site. Residues 198-201 are aspartate; that stretch reads QLFK. R220 contributes to the L-aspartate binding site. ATP-binding positions include 220-222 and Q229; that span reads RDE. H448 provides a ligand contact to L-aspartate. E483 contributes to the ATP binding site. R490 lines the L-aspartate pocket. Residue 535-538 participates in ATP binding; it reads GIDR.

It belongs to the class-II aminoacyl-tRNA synthetase family. Type 1 subfamily. In terms of assembly, homodimer.

The protein localises to the cytoplasm. It carries out the reaction tRNA(Asp) + L-aspartate + ATP = L-aspartyl-tRNA(Asp) + AMP + diphosphate. Its function is as follows. Catalyzes the attachment of L-aspartate to tRNA(Asp) in a two-step reaction: L-aspartate is first activated by ATP to form Asp-AMP and then transferred to the acceptor end of tRNA(Asp). The chain is Aspartate--tRNA ligase from Xylella fastidiosa (strain 9a5c).